The sequence spans 216 residues: MNNMNVIIADDHPIVLFGIRKSLEQIEWVNVVGEFEDSTALINNLPKLDAHVLITDLSMPGDKYGDGITLIKYIKRHFPSLSIIVLTMNNNPAILSAVLDLDIEGIVLKQGAPTDLPKALAALQKGKKFTPESVSRLLEKISAGGYGDKRLSPKESEVLRLFAEGFLVTEIAKKLNRSIKTISSQKKSAMMKLGVENDIALLNYLSSVTLSPADKD.

In terms of domain architecture, Response regulatory spans 5–124; that stretch reads NVIIADDHPI…DLPKALAALQ (120 aa). Residue Asp-56 is modified to 4-aspartylphosphate. The HTH luxR-type domain occupies 144-209; that stretch reads GGYGDKRLSP…ALLNYLSSVT (66 aa). Positions 168–187 form a DNA-binding region, H-T-H motif; the sequence is VTEIAKKLNRSIKTISSQKK.

Belongs to the RcsB family. Interacts with RcsD and RcsA. In terms of processing, phosphorylated and activated by RcsD.

In terms of biological role, component of the Rcs signaling system, which controls transcription of numerous genes. RcsB is the response regulator that binds to regulatory DNA regions. Can function both in an RcsA-dependent or RcsA-independent manner. The polypeptide is Transcriptional regulatory protein RcsB (Escherichia coli O157:H7).